Here is a 289-residue protein sequence, read N- to C-terminus: MAAETASGYIQHHLQNLTYGQLPDGSWGFAHSAAEAKAMGFWAFHLDTLGWSVALGLIFLLIFRMAAKKATSGQPGGLQNFVEVMVDFVNGSVKDSFHGRSPVIAPLALTIFVWVFLMNAVDLIPVDWIPQLAILISGDPHIPFRAVSTTDPNATLAMAFCVFALIIFYSIKVKGLGGFIGELTLHPFGSKNIFVQILLIPVNFLLEFVTLIAKPISLALRLFGNMYAGELVFILIAVMFGSGLLWLSGLGVVLQWAWAVFHILIITLQAFIFMMLTIVYLSMAHEDNH.

A run of 6 helical transmembrane segments spans residues 43–63 (AFHL…LLIF), 104–124 (IAPL…VDLI), 160–180 (FCVF…GGFI), 193–213 (IFVQ…TLIA), 232–252 (VFIL…GLGV), and 259–279 (AVFH…LTIV).

It belongs to the ATPase A chain family. In terms of assembly, F-type ATPases have 2 components, CF(1) - the catalytic core - and CF(0) - the membrane proton channel. CF(1) has five subunits: alpha(3), beta(3), gamma(1), delta(1), epsilon(1). CF(0) has three main subunits: a(1), b(2) and c(9-12). The alpha and beta chains form an alternating ring which encloses part of the gamma chain. CF(1) is attached to CF(0) by a central stalk formed by the gamma and epsilon chains, while a peripheral stalk is formed by the delta and b chains.

The protein localises to the cell inner membrane. Its function is as follows. Key component of the proton channel; it plays a direct role in the translocation of protons across the membrane. The polypeptide is ATP synthase subunit a (Pseudomonas putida (strain ATCC 47054 / DSM 6125 / CFBP 8728 / NCIMB 11950 / KT2440)).